The primary structure comprises 453 residues: Neuraminidase (453 aa).

Topologically, residues 1-6 (MNPNQK) are intravirion. The helical transmembrane segment at 7–27 (IITIGSICMVVGIISLILQIG) threads the bilayer. The segment at 11-33 (GSICMVVGIISLILQIGNIISIW) is involved in apical transport and lipid raft association. Over 28-453 (NIISIWISHS…GAELPFTIDK (426 aa)) the chain is Virion surface. A hypervariable stalk region region spans residues 36–74 (HSIQTGNQNHTGICNQGIITYNVVAGQDSTSVILTGNSS). 2 N-linked (GlcNAc...) asparagine; by host glycosylation sites follow: Asn44 and Asn72. The interval 75 to 453 (LCPIRGWAIH…GAELPFTIDK (379 aa)) is head of neuraminidase. 8 disulfides stabilise this stretch: Cys76–Cys401, Cys108–Cys113, Cys168–Cys215, Cys217–Cys222, Cys263–Cys276, Cys265–Cys274, Cys302–Cys319, and Cys405–Cys430. Substrate is bound at residue Arg102. Asn130 carries N-linked (GlcNAc...) asparagine; by host glycosylation. The active-site Proton donor/acceptor is Asp135. Arg136 provides a ligand contact to substrate. N-linked (GlcNAc...) asparagine; by host glycosylation occurs at Asn219. Substrate is bound at residue 261–262 (EE). Substrate is bound at residue Arg277. Ca(2+) is bound by residues Asp278, Gly282, Asp308, and Asn328. Residue Arg352 coordinates substrate. Tyr386 acts as the Nucleophile in catalysis.

Belongs to the glycosyl hydrolase 34 family. As to quaternary structure, homotetramer. Ca(2+) is required as a cofactor. In terms of processing, N-glycosylated.

It localises to the virion membrane. The protein localises to the host apical cell membrane. It catalyses the reaction Hydrolysis of alpha-(2-&gt;3)-, alpha-(2-&gt;6)-, alpha-(2-&gt;8)- glycosidic linkages of terminal sialic acid residues in oligosaccharides, glycoproteins, glycolipids, colominic acid and synthetic substrates.. Inhibited by the neuraminidase inhibitors zanamivir (Relenza) and oseltamivir (Tamiflu). These drugs interfere with the release of progeny virus from infected cells and are effective against all influenza strains. Resistance to neuraminidase inhibitors is quite rare. In terms of biological role, unlike other strains, A/WSN/33 neuraminidase binds and activates plasminogen into plasmin in the vicinity of HA so that activated plasmin cleaves HA rendering the virus infectious. Functionally, catalyzes the removal of terminal sialic acid residues from viral and cellular glycoconjugates. Cleaves off the terminal sialic acids on the glycosylated HA during virus budding to facilitate virus release. Additionally helps virus spread through the circulation by further removing sialic acids from the cell surface. These cleavages prevent self-aggregation and ensure the efficient spread of the progeny virus from cell to cell. Otherwise, infection would be limited to one round of replication. Described as a receptor-destroying enzyme because it cleaves a terminal sialic acid from the cellular receptors. May facilitate viral invasion of the upper airways by cleaving the sialic acid moieties on the mucin of the airway epithelial cells. Likely to plays a role in the budding process through its association with lipid rafts during intracellular transport. May additionally display a raft-association independent effect on budding. Plays a role in the determination of host range restriction on replication and virulence. Sialidase activity in late endosome/lysosome traffic seems to enhance virus replication. The sequence is that of Neuraminidase from Influenza A virus (strain A/Wilson-Smith/1933 H1N1) (Influenza A virus (strain A/WS/1933 H1N1)).